Here is a 180-residue protein sequence, read N- to C-terminus: Cytidylate kinase (180 aa).

7 to 15 lines the ATP pocket; it reads GLPGSGTTT.

Belongs to the cytidylate kinase family. Type 2 subfamily.

It is found in the cytoplasm. It catalyses the reaction CMP + ATP = CDP + ADP. The catalysed reaction is dCMP + ATP = dCDP + ADP. This chain is Cytidylate kinase, found in Methanosarcina acetivorans (strain ATCC 35395 / DSM 2834 / JCM 12185 / C2A).